Reading from the N-terminus, the 307-residue chain is 4-hydroxythreonine-4-phosphate dehydrogenase (307 aa).

His-121 and Thr-122 together coordinate substrate. Residues His-150, His-189, and His-246 each coordinate a divalent metal cation. Substrate contacts are provided by Lys-254, Asn-263, and Arg-272.

The protein belongs to the PdxA family. Homodimer. It depends on Zn(2+) as a cofactor. Mg(2+) serves as cofactor. Co(2+) is required as a cofactor.

It is found in the cytoplasm. It catalyses the reaction 4-(phosphooxy)-L-threonine + NAD(+) = 3-amino-2-oxopropyl phosphate + CO2 + NADH. It functions in the pathway cofactor biosynthesis; pyridoxine 5'-phosphate biosynthesis; pyridoxine 5'-phosphate from D-erythrose 4-phosphate: step 4/5. Its function is as follows. Catalyzes the NAD(P)-dependent oxidation of 4-(phosphooxy)-L-threonine (HTP) into 2-amino-3-oxo-4-(phosphooxy)butyric acid which spontaneously decarboxylates to form 3-amino-2-oxopropyl phosphate (AHAP). In Campylobacter fetus subsp. fetus (strain 82-40), this protein is 4-hydroxythreonine-4-phosphate dehydrogenase.